The chain runs to 347 residues: Phenylalanine--tRNA ligase alpha subunit (347 aa).

E261 provides a ligand contact to Mg(2+).

Belongs to the class-II aminoacyl-tRNA synthetase family. Phe-tRNA synthetase alpha subunit type 1 subfamily. As to quaternary structure, tetramer of two alpha and two beta subunits. Mg(2+) serves as cofactor.

The protein localises to the cytoplasm. The catalysed reaction is tRNA(Phe) + L-phenylalanine + ATP = L-phenylalanyl-tRNA(Phe) + AMP + diphosphate + H(+). The sequence is that of Phenylalanine--tRNA ligase alpha subunit from Streptococcus mutans serotype c (strain ATCC 700610 / UA159).